The chain runs to 349 residues: Probable G-protein coupled receptor 21 (349 aa).

The Extracellular portion of the chain corresponds to 1–32 (MNSTLDGNQSSHPFCLLAFGYLETVNFCLLEV). N-linked (GlcNAc...) asparagine glycosylation is found at Asn2 and Asn8. Residues 33-53 (LIIVFLTVLIISGNIIVIFVF) traverse the membrane as a helical segment. The Cytoplasmic portion of the chain corresponds to 54–75 (HCAPLLNHHTTSYFIQTMAYAD). A helical transmembrane segment spans residues 76–96 (LFVGVSCVVPSLSLLHHPLPV). The Extracellular portion of the chain corresponds to 97–104 (EESLTCQI). The helical transmembrane segment at 105 to 125 (FGFVVSVLKSVSMASLACISI) threads the bilayer. The Cytoplasmic portion of the chain corresponds to 126–147 (DRYIAITKPLTYNTLVTPWRLR). Residues 148–168 (LCIFLIWLYSTLVFLPSFFHW) traverse the membrane as a helical segment. Topologically, residues 169 to 191 (GKPGYHGDVFQWCAESWHTDSYF) are extracellular. The chain crosses the membrane as a helical span at residues 192–212 (TLFIVMMLYAPAALIVCFTYF). The Cytoplasmic segment spans residues 213-252 (NIFRICQQHTKDISERQARFSSQSGETGEVQACPDKRYAM). A helical membrane pass occupies residues 253 to 273 (VLFRITSVFYILWLPYIIYFL). Residues 274–283 (LESSTGHSNR) are Extracellular-facing. Residues 284–304 (FASFLTTWLAISNSFCNCVIY) traverse the membrane as a helical segment. At 305–349 (SLSNSVFQRGLKRLSGAMCTSCASQTTANDPYTVRSKGPLNGCHI) the chain is on the cytoplasmic side.

This sequence belongs to the G-protein coupled receptor 1 family. Not detected in the brain regions thalamus, putamen, caudate, frontal cortex, pons, hypothalamus, hippocampus.

The protein localises to the cell membrane. Its function is as follows. Orphan receptor. This Homo sapiens (Human) protein is Probable G-protein coupled receptor 21 (GPR21).